The chain runs to 480 residues: Probable histone deacetylase 1-B (480 aa).

The interval 10–321 (KVCYYYDGDV…WTYETAVALD (312 aa)) is histone deacetylase. His141 is a catalytic residue. Positions 387 to 480 (DSVHDDSGEE…KRVKEETKSV (94 aa)) are disordered. Positions 401–416 (PDKRISIRSSDKRIAC) are enriched in basic and acidic residues. Over residues 417–427 (DEEFSDSEDEG) the composition is skewed to acidic residues. Positions 443–480 (VKTEEEKEGEDKKDVKEEEKAKDEKTDSKRVKEETKSV) are enriched in basic and acidic residues.

Belongs to the histone deacetylase family. HD type 1 subfamily. Found in a large complex with RBBP4 and MI-2.

It is found in the nucleus. Its subcellular location is the cytoplasm. The enzyme catalyses N(6)-acetyl-L-lysyl-[histone] + H2O = L-lysyl-[histone] + acetate. It carries out the reaction N(6)-acetyl-L-lysyl-[protein] + H2O = L-lysyl-[protein] + acetate. The catalysed reaction is N(6)-(2E)-butenoyl-L-lysyl-[protein] + H2O = (2E)-2-butenoate + L-lysyl-[protein]. In terms of biological role, histone deacetylase that catalyzes the deacetylation of lysine residues on the N-terminal part of the core histones (H2A, H2B, H3 and H4). Histone deacetylation gives a tag for epigenetic repression and plays an important role in transcriptional regulation, cell cycle progression and developmental events. Histone deacetylases act via the formation of large multiprotein complexes. Also functions as a deacetylase for non-histone proteins. In addition to protein deacetylase activity, also has protein-lysine deacylase activity: acts as a protein decrotonylase by mediating decrotonylation ((2E)-butenoyl) of histones. This is Probable histone deacetylase 1-B (hdac1-b) from Xenopus laevis (African clawed frog).